A 439-amino-acid chain; its full sequence is Glutamate--tRNA ligase 2 (439 aa).

Positions 9-19 (PSPTGHLHVGN) match the 'HIGH' region motif. The 'KMSKS' region motif lies at 233–237 (KLSKR). An ATP-binding site is contributed by lysine 236.

It belongs to the class-I aminoacyl-tRNA synthetase family. Glutamate--tRNA ligase type 1 subfamily. In terms of assembly, monomer.

The protein localises to the cytoplasm. It carries out the reaction tRNA(Glu) + L-glutamate + ATP = L-glutamyl-tRNA(Glu) + AMP + diphosphate. Its function is as follows. Catalyzes the attachment of glutamate to tRNA(Glu) in a two-step reaction: glutamate is first activated by ATP to form Glu-AMP and then transferred to the acceptor end of tRNA(Glu). In Sphingopyxis alaskensis (strain DSM 13593 / LMG 18877 / RB2256) (Sphingomonas alaskensis), this protein is Glutamate--tRNA ligase 2.